We begin with the raw amino-acid sequence, 445 residues long: Probable aminotransferase TAT3 (445 aa).

Belongs to the class-I pyridoxal-phosphate-dependent aminotransferase family. Pyridoxal 5'-phosphate is required as a cofactor. In terms of tissue distribution, expressed in roots, leaves and cauline leaves.

In Arabidopsis thaliana (Mouse-ear cress), this protein is Probable aminotransferase TAT3 (TAT3).